A 133-amino-acid polypeptide reads, in one-letter code: Small ribosomal subunit protein uS9 (133 aa).

Belongs to the universal ribosomal protein uS9 family.

The protein is Small ribosomal subunit protein uS9 of Picrophilus torridus (strain ATCC 700027 / DSM 9790 / JCM 10055 / NBRC 100828 / KAW 2/3).